The sequence spans 371 residues: MDARRVPQKDLRVKKNLKKFRYVKLISMETSSSSDDSCDSFASDNFANTRLQSVREGCRTRSQCRHSGPLRVAMKFPARSTRGATNKKAESRQPSENSVTDSNSDSEDESGMNFLEKRALNIKQNKAMLAKLMSELESFPGSFRGRHPLPGSDSQSRRPRRRTFPGVASRRNPERRARPLTRSRSRILGSLDALPMEEEEEEDKYMLVRKRKTVDGYMNEDDLPRSRRSRSSVTLPHIIRPVEEITEEELENVCSNSREKIYNRSLGSTCHQCRQKTIDTKTNCRNPDCWGVRGQFCGPCLRNRYGEEVRDALLDPNWHCPPCRGICNCSFCRQRDGRCATGVLVYLAKYHGFGNVHAYLKSLKQEFEMQA.

Disordered stretches follow at residues 60–110 (TRSQ…EDES) and 140–188 (PGSF…SRIL). Residues 94-103 (PSENSVTDSN) are compositionally biased toward polar residues. A Phosphoserine modification is found at Ser-142. An interaction with MYC region spans residues 146–170 (RHPLPGSDSQSRRPRRRTFPGVASR). Positions 160–176 (RRRTFPGVASRRNPERR) match the Nuclear localization signal motif. A Phosphothreonine modification is found at Thr-163. Residue Ser-190 is modified to Phosphoserine. Residue Lys-204 forms a Glycyl lysine isopeptide (Lys-Gly) (interchain with G-Cter in SUMO2) linkage. Positions 247–371 (EEELENVCSN…SLKQEFEMQA (125 aa)) are mediates transcriptional activity.

In terms of assembly, interacts with MYC (via C-terminus), YWHAE and YWHAZ. Post-translationally, phosphorylation at Thr-163 promotes interaction with YWHAE and YWHAZ, dissociation from MYC and sequestration in the cytoplasm. In vitro, phosphorylated at Thr-163 by AKT. As to expression, ubiquitous with higher level in thymus and small intestine. Overexpressed in a large number of tumors, in blood from patients with acute myelogenous leukemia (AML) and in chronic myelogenous leukemia (CML) blast crisis.

Its subcellular location is the nucleus. It is found in the cytoplasm. Functionally, participates in MYC-mediated cell transformation and apoptosis; induces anchorage-independent growth and clonogenicity in lymphoblastoid cells. Insufficient to induce tumorigenicity when overexpressed but contributes to MYC-mediated tumorigenesis. May play a role as transcriptional regulator. In Homo sapiens (Human), this protein is Cell division cycle-associated protein 7 (CDCA7).